The following is a 316-amino-acid chain: Ribosomal protein L11 methyltransferase (316 aa).

Threonine 157, glycine 178, aspartate 200, and asparagine 243 together coordinate S-adenosyl-L-methionine.

It belongs to the methyltransferase superfamily. PrmA family.

The protein resides in the cytoplasm. The catalysed reaction is L-lysyl-[protein] + 3 S-adenosyl-L-methionine = N(6),N(6),N(6)-trimethyl-L-lysyl-[protein] + 3 S-adenosyl-L-homocysteine + 3 H(+). In terms of biological role, methylates ribosomal protein L11. In Streptococcus pneumoniae (strain 70585), this protein is Ribosomal protein L11 methyltransferase.